We begin with the raw amino-acid sequence, 490 residues long: Ribulose bisphosphate carboxylase large chain (490 aa).

Substrate-binding residues include Asn127 and Thr177. Lys179 functions as the Proton acceptor in the catalytic mechanism. Lys181 provides a ligand contact to substrate. Lys205, Asp207, and Glu208 together coordinate Mg(2+). An N6-carboxylysine modification is found at Lys205. His297 (proton acceptor) is an active-site residue. Residues Arg298, His330, and Ser382 each contribute to the substrate site.

This sequence belongs to the RuBisCO large chain family. Type I subfamily. As to quaternary structure, heterohexadecamer of 8 large chains and 8 small chains. The cofactor is Mg(2+).

It is found in the plastid. The protein resides in the chloroplast. It catalyses the reaction 2 (2R)-3-phosphoglycerate + 2 H(+) = D-ribulose 1,5-bisphosphate + CO2 + H2O. The catalysed reaction is D-ribulose 1,5-bisphosphate + O2 = 2-phosphoglycolate + (2R)-3-phosphoglycerate + 2 H(+). In terms of biological role, ruBisCO catalyzes two reactions: the carboxylation of D-ribulose 1,5-bisphosphate, the primary event in carbon dioxide fixation, as well as the oxidative fragmentation of the pentose substrate in the photorespiration process. Both reactions occur simultaneously and in competition at the same active site. This is Ribulose bisphosphate carboxylase large chain from Trieres chinensis (Marine centric diatom).